We begin with the raw amino-acid sequence, 100 residues long: Apolipoprotein C-II (100 aa).

An N-terminal signal peptide occupies residues 1 to 22; the sequence is MGSRFLLALFLVLLVLGCEVQA. A lipid binding region spans residues 66 to 74; sequence SVDEKLRDM. The tract at residues 78-100 is lipoprotein lipase cofactor; the sequence is SSAAMTTYASIFTDQILTLLKGE.

It belongs to the apolipoprotein C2 family. In terms of processing, proapolipoprotein C-II is synthesized as a sialic acid containing glycoprotein which is subsequently desialylated prior to its proteolytic processing. Proapolipoprotein C-II, the major form found in plasma undergoes proteolytic cleavage of its N-terminal hexapeptide to generate the mature form apolipoprotein C-II, which occurs as the minor form in plasma.

The protein resides in the secreted. Functionally, component of chylomicrons, very low-density lipoproteins (VLDL), low-density lipoproteins (LDL), and high-density lipoproteins (HDL) in plasma. Plays an important role in lipoprotein metabolism as an activator of lipoprotein lipase. This is Apolipoprotein C-II (APOC2) from Ellobius talpinus (Northern mole vole).